A 79-amino-acid chain; its full sequence is MGASDKFIGFVMVLFRIFVFGYYTTWVIITPFIVSDHWIQQYFLPREYGIIIPLVLLVVGITAIGTFLGLVMIKSKKNK.

A run of 2 helical transmembrane segments spans residues 8–28 and 50–70; these read IGFVMVLFRIFVFGYYTTWVI and IIIPLVLLVVGITAIGTFLGL.

It belongs to the DPM2 family. As to quaternary structure, component of the dolichol-phosphate mannose (DPM) synthase complex composed of dpm1, dpm2 and dpm3.

The protein localises to the endoplasmic reticulum membrane. The protein operates within protein modification; protein glycosylation. Regulates the biosynthesis of dolichol phosphate-mannose. Regulatory subunit of the dolichol-phosphate mannose (DPM) synthase complex; essential for the ER localization and stable expression of dpm1. The sequence is that of Dolichol phosphate-mannose biosynthesis regulatory protein (dpm2-1) from Dictyostelium discoideum (Social amoeba).